Here is a 249-residue protein sequence, read N- to C-terminus: Basic leucine zipper 23 (249 aa).

Residues 66-90 form a disordered region; that stretch reads KVSTDDTSESSGKKRPLGNREAVRK. A bZIP domain is found at 74–121; that stretch reads ESSGKKRPLGNREAVRKYREKKKAKAASLEDEVMRLKAVNNQLLKRLQ. Positions 78–98 are basic motif; sequence KKRPLGNREAVRKYREKKKAK. Residues 102–116 are leucine-zipper; sequence LEDEVMRLKAVNNQL.

Its subcellular location is the nucleus. Transcription factor involved in the response to zinc ion deficiency. Binds to the consensus sequence 5'-[AG]TGTCGACA[CT]-3' also called zinc deficiency response element (ZDRE). The ZDRE sequence is conserved in the plant kingdom and present in the promoters of genes that constitute the primary response to zinc deficiency, comprising additional ZIP metal transporter genes. Required for zinc accumulation in roots. Mediates the expression of the zinc transporter ZIP12 during growth in zinc-deficient conditions. ZIP12 transporter is involved in zinc uptake in roots. The protein is Basic leucine zipper 23 of Arabidopsis thaliana (Mouse-ear cress).